Reading from the N-terminus, the 708-residue chain is MKYLFIAIILILYCSFTKADQKKFLVNMYDNDPLFSPDFENANGAQTGLVKKKLGSDGKPIPANYDMKDPNGNYYIKNATTFKSWFNEVAGVSILVPFELVLTQTAGSQNYYSYSNTSFFPLNELGWYNPSIKGDYEFKKYQDSNKKEQNFHFCMHASFIMSTNCKEVFKFKGDDDVWVFINDVLVLDIGGVHGVQDGTVDMANLPEKIHDSTNSKLGNCKNGTYPFDFFYCERHTKASNCLFETNMGFTCSYYDYCGICNGKGECCTDVKLNQCYTKKCPLPNSLPNGATNYQDYMTIVPTNTCGGTDKCKIYSCNNSTGCEFKQKSCDDGDKCTKDACDSKTGYCSNIPTNPSVVTSCLKSGCDSTTGNYSTPTNCDDKDPCTIDSCINGQGCVHTKACDDEDPCTTDSCSADGKCTHTAIAKCNSDCPSCPSKKCKITSCSEDSGACNYVDMVFASPSECYKATCDPETEEAIYSPIDSSCDTSDSCFTAQCNLNKTCTRVPAINCDDNNECTTDSCSGGSCSNTAIACDDNDPCTIDTCSPSEGCIFTPIVCEQTSLCNTFTCSVGKCVPTPITCSSSVKCQDSICREGVGCVYFNRTCPPDDDCSSAYCSMETGKCISKAYDPLPFSCQSTAVKVGVGIGAAAAAGIAIGGAVAAGLAIFGGKKAYDTWKTSRGNVMTGSQSNPLYTQNQNNGNNPLYSAPAE.

A signal peptide spans Met1–Ala19. At Asp20–Gly643 the chain is on the extracellular side. N-linked (GlcNAc...) asparagine glycans are attached at residues Asn78, Asn116, Asn222, Asn317, Asn318, Asn371, Asn498, and Asn600. The PA14 domain maps to Thr103–Lys263. A helical membrane pass occupies residues Ile644 to Ile664. The Cytoplasmic segment spans residues Phe665 to Glu708. A compositionally biased stretch (polar residues) spans Met682–Leu702. Residues Met682–Glu708 are disordered.

This sequence belongs to the prespore-cell-inducing factor family. As to quaternary structure, forms a complex with dicB.

The protein resides in the membrane. Its subcellular location is the secreted. Its function is as follows. Acts as a quorum sensing protein regulating discoidin gene expression during growth and development. D.discoideum is a single-celled amoebae and switches to multicellular development when food becomes limited. As the growing cells reach a high density, they begin expressing discoidin genes. The ability of psiF/dicA to induce discoidin gene expression when present in conditioned medium, suggests that it allows cells to sense their local density. This is Protein psiF (psiF) from Dictyostelium discoideum (Social amoeba).